The sequence spans 227 residues: Small ribosomal subunit protein uS3 (227 aa).

The KH type-2 domain maps to 38–106 (LRKFIKDRFY…NVNINIQEIR (69 aa)).

It belongs to the universal ribosomal protein uS3 family. Part of the 30S ribosomal subunit. Forms a tight complex with proteins S10 and S14.

Its function is as follows. Binds the lower part of the 30S subunit head. Binds mRNA in the 70S ribosome, positioning it for translation. This Syntrophomonas wolfei subsp. wolfei (strain DSM 2245B / Goettingen) protein is Small ribosomal subunit protein uS3.